Reading from the N-terminus, the 103-residue chain is Large ribosomal subunit protein bL21 (103 aa).

This sequence belongs to the bacterial ribosomal protein bL21 family. In terms of assembly, part of the 50S ribosomal subunit. Contacts protein L20.

Its function is as follows. This protein binds to 23S rRNA in the presence of protein L20. The protein is Large ribosomal subunit protein bL21 of Beijerinckia indica subsp. indica (strain ATCC 9039 / DSM 1715 / NCIMB 8712).